The chain runs to 96 residues: UPF0235 protein YggU (96 aa).

This sequence belongs to the UPF0235 family.

This chain is UPF0235 protein YggU, found in Salmonella typhimurium (strain LT2 / SGSC1412 / ATCC 700720).